A 466-amino-acid polypeptide reads, in one-letter code: L-seryl-tRNA(Sec) selenium transferase (466 aa).

Lys-294 is subject to N6-(pyridoxal phosphate)lysine.

It belongs to the SelA family. Pyridoxal 5'-phosphate serves as cofactor.

It is found in the cytoplasm. The enzyme catalyses L-seryl-tRNA(Sec) + selenophosphate + H(+) = L-selenocysteinyl-tRNA(Sec) + phosphate. It functions in the pathway aminoacyl-tRNA biosynthesis; selenocysteinyl-tRNA(Sec) biosynthesis; selenocysteinyl-tRNA(Sec) from L-seryl-tRNA(Sec) (bacterial route): step 1/1. Functionally, converts seryl-tRNA(Sec) to selenocysteinyl-tRNA(Sec) required for selenoprotein biosynthesis. This chain is L-seryl-tRNA(Sec) selenium transferase, found in Carboxydothermus hydrogenoformans (strain ATCC BAA-161 / DSM 6008 / Z-2901).